The following is an 846-amino-acid chain: Structure-specific endonuclease subunit SLX4 (846 aa).

Disordered stretches follow at residues 1–20 (MTDH…VGSA), 84–111 (KAGA…AESM), 123–164 (QPAE…VKKA), 283–322 (RTSK…SKIT), 480–513 (DPTP…SSLL), 624–690 (PPNA…MGSQ), and 723–751 (TLAS…QTRA). A compositionally biased stretch (basic and acidic residues) spans 141–153 (KPSEKGQKSEKTA). The span at 293–303 (LDTGTSSTSEG) shows a compositional bias: polar residues. Residues 306-318 (KRKQTKKAKRSAK) show a composition bias toward basic residues. Composition is skewed to polar residues over residues 657–680 (KEIT…SKPT) and 725–751 (ASRS…QTRA).

Belongs to the SLX4 family. As to quaternary structure, forms a heterodimer with SLX1. Phosphorylated in response to DNA damage.

The protein resides in the nucleus. Functionally, regulatory subunit of the SLX1-SLX4 structure-specific endonuclease that resolves DNA secondary structures generated during DNA repair and recombination. Has endonuclease activity towards branched DNA substrates, introducing single-strand cuts in duplex DNA close to junctions with ss-DNA. The protein is Structure-specific endonuclease subunit SLX4 of Arthroderma otae (strain ATCC MYA-4605 / CBS 113480) (Microsporum canis).